A 307-amino-acid chain; its full sequence is Ribonuclease Z (307 aa).

The Zn(2+) site is built by H63, H65, D67, H68, H143, D213, and H271. The Proton acceptor role is filled by D67.

This sequence belongs to the RNase Z family. Homodimer. Zn(2+) serves as cofactor.

The catalysed reaction is Endonucleolytic cleavage of RNA, removing extra 3' nucleotides from tRNA precursor, generating 3' termini of tRNAs. A 3'-hydroxy group is left at the tRNA terminus and a 5'-phosphoryl group is left at the trailer molecule.. In terms of biological role, zinc phosphodiesterase, which displays some tRNA 3'-processing endonuclease activity. Probably involved in tRNA maturation, by removing a 3'-trailer from precursor tRNA. The sequence is that of Ribonuclease Z from Lactococcus lactis subsp. cremoris (strain SK11).